Reading from the N-terminus, the 655-residue chain is Sphingomyelin phosphodiesterase 3 (655 aa).

The Cytoplasmic portion of the chain corresponds to M1–N10. The segment at residues S11–V31 is an intramembrane region (helical). Residues D32–T64 are Cytoplasmic-facing. S-palmitoyl cysteine attachment occurs at residues C53, C54, and C59. An intramembrane region (helical) is located at residues P65–W85. The Cytoplasmic portion of the chain corresponds to S86–A655. Residue S178 is modified to Phosphoserine. Residues V210–A319 are disordered. Basic and acidic residues-rich tracts occupy residues Y212–D222 and G248–E257. Positions T279–R299 are enriched in polar residues. A Phosphoserine modification is found at S291. Mg(2+) is bound at residue E364. S-palmitoyl cysteine attachment occurs at residues C397 and C398. Residue H639 is the Proton acceptor of the active site.

It belongs to the neutral sphingomyelinase family. Requires Mg(2+) as cofactor. Palmitoylated, palmitoylation-deficient proteins are targeted for lysosomal degradation. In terms of tissue distribution, predominantly expressed in brain.

It is found in the golgi apparatus membrane. Its subcellular location is the cell membrane. It carries out the reaction a sphingomyelin + H2O = phosphocholine + an N-acylsphing-4-enine + H(+). The enzyme catalyses N-(15Z-tetracosenoyl)sphing-4-enine-1-phosphocholine + H2O = N-(15Z-tetracosenoyl)-sphing-4-enine + phosphocholine + H(+). The catalysed reaction is N-(tetracosanoyl)-sphing-4-enine-1-phosphocholine + H2O = N-tetracosanoyl-sphing-4-enine + phosphocholine + H(+). It catalyses the reaction an N-(acyl)-sphingosylphosphocholine + H2O = an N-acyl-sphingoid base + phosphocholine + H(+). It carries out the reaction 1-hexadecanoyl-sn-glycero-3-phosphocholine + H2O = 1-hexadecanoyl-sn-glycerol + phosphocholine + H(+). The enzyme catalyses 1-O-octadecyl-sn-glycero-3-phosphocholine + H2O = 1-O-octadecyl-sn-glycerol + phosphocholine + H(+). The catalysed reaction is a sphingosylphosphocholine + H2O = a sphingoid base + phosphocholine + H(+). It catalyses the reaction N-(hexadecanoyl)-sphing-4-enine-1-phosphocholine + H2O = N-hexadecanoylsphing-4-enine + phosphocholine + H(+). It participates in lipid metabolism; sphingolipid metabolism. Inhibited by nSMase inhibitor GW4869. Binding of anionic phospholipids (APLs) such as phosphatidylserine (PS) and phosphatidic acid (PA) increases enzymatic activity. In terms of biological role, catalyzes the hydrolysis of sphingomyelin to form ceramide and phosphocholine. Ceramide mediates numerous cellular functions, such as apoptosis and growth arrest, and is capable of regulating these 2 cellular events independently. Also hydrolyzes sphingosylphosphocholine. Regulates the cell cycle by acting as a growth suppressor in confluent cells. Probably acts as a regulator of postnatal development and participates in bone and dentin mineralization. Binds to anionic phospholipids (APLs) such as phosphatidylserine (PS) and phosphatidic acid (PA) that modulate enzymatic activity and subcellular location. May be involved in IL-1-beta-induced JNK activation in hepatocytes. May act as a mediator in transcriptional regulation of NOS2/iNOS via the NF-kappa-B activation under inflammatory conditions. The chain is Sphingomyelin phosphodiesterase 3 from Homo sapiens (Human).